We begin with the raw amino-acid sequence, 240 residues long: Uridylate kinase (240 aa).

13–16 serves as a coordination point for ATP; the sequence is KASG. Residues 21–26 form an involved in allosteric activation by GTP region; it reads GSQGFG. G55 is a binding site for UMP. ATP contacts are provided by G56 and R60. UMP is bound by residues D75 and 136–143; that span reads TGNPFFTT. Residues T163, Q164, Y169, and D172 each contribute to the ATP site.

Belongs to the UMP kinase family. In terms of assembly, homohexamer.

Its subcellular location is the cytoplasm. The enzyme catalyses UMP + ATP = UDP + ADP. It participates in pyrimidine metabolism; CTP biosynthesis via de novo pathway; UDP from UMP (UMPK route): step 1/1. Allosterically activated by GTP. Inhibited by UTP. Functionally, catalyzes the reversible phosphorylation of UMP to UDP. The protein is Uridylate kinase of Brucella melitensis biotype 1 (strain ATCC 23456 / CCUG 17765 / NCTC 10094 / 16M).